The chain runs to 179 residues: UPF0227 protein Shewmr7_1806 (179 aa).

It belongs to the UPF0227 family.

The protein is UPF0227 protein Shewmr7_1806 of Shewanella sp. (strain MR-7).